Here is a 228-residue protein sequence, read N- to C-terminus: Ankyrin repeat domain-containing protein 46 (228 aa).

ANK repeat units lie at residues Gln11 to Ile40, Arg44 to Ala73, Gln77 to Ile103, and Asn107 to Gly138. The helical transmembrane segment at Val195–Gly215 threads the bilayer.

The protein resides in the membrane. The chain is Ankyrin repeat domain-containing protein 46 (ankrd46) from Danio rerio (Zebrafish).